Consider the following 412-residue polypeptide: uncharacterized protein (412 aa).

Residue H49 participates in Zn(2+) binding. The Proton acceptor role is filled by E52. Residues H53 and E129 each contribute to the Zn(2+) site.

It belongs to the peptidase M16 family. Requires Zn(2+) as cofactor.

This is an uncharacterized protein from Rickettsia typhi (strain ATCC VR-144 / Wilmington).